A 185-amino-acid chain; its full sequence is Transmembrane protein 140 (185 aa).

Residues 1 to 11 lie on the Cytoplasmic side of the membrane; the sequence is MAGPRPRWRDQ. Residues 12 to 32 form a helical membrane-spanning segment; that stretch reads LLFMSIIVLVIVVICLMFYAL. Residues 33–77 lie on the Extracellular side of the membrane; sequence LWEAGNLTDLPNLRIGFYNFCLWNEDTSTLQCHQFPELEALGVPR. Asn38 carries an N-linked (GlcNAc...) asparagine glycan. The helical transmembrane segment at 78 to 98 threads the bilayer; the sequence is VGLGLARLGVYGSLVLTLFAP. The Cytoplasmic segment spans residues 99 to 114; the sequence is QPLLLAQCNSDERAWR. The chain crosses the membrane as a helical span at residues 115-135; sequence LAVGFLAVSSVLLAGGLGLFL. Topologically, residues 136-150 are extracellular; that stretch reads SYVWKWVRLSLPGPG. The chain crosses the membrane as a helical span at residues 151–171; the sequence is FLALGSAQALLILLLIAMAVF. Residues 172–185 lie on the Cytoplasmic side of the membrane; that stretch reads PLRAERAESKLESC.

As to expression, expression significantly higher in gliomas than in normal brain tissues.

The protein resides in the membrane. This is Transmembrane protein 140 (TMEM140) from Homo sapiens (Human).